The primary structure comprises 91 residues: Small ribosomal subunit protein uS15 (91 aa).

The protein belongs to the universal ribosomal protein uS15 family. As to quaternary structure, part of the 30S ribosomal subunit. Forms a bridge to the 50S subunit in the 70S ribosome, contacting the 23S rRNA.

Functionally, one of the primary rRNA binding proteins, it binds directly to 16S rRNA where it helps nucleate assembly of the platform of the 30S subunit by binding and bridging several RNA helices of the 16S rRNA. In terms of biological role, forms an intersubunit bridge (bridge B4) with the 23S rRNA of the 50S subunit in the ribosome. The polypeptide is Small ribosomal subunit protein uS15 (Rickettsia prowazekii (strain Madrid E)).